The following is a 151-amino-acid chain: Nucleoside diphosphate kinase (151 aa).

Lys9, Phe57, Arg85, Thr91, Arg102, and Asn112 together coordinate ATP. The active-site Pros-phosphohistidine intermediate is His115.

It belongs to the NDK family. Mg(2+) serves as cofactor.

It localises to the cytoplasm. It carries out the reaction a 2'-deoxyribonucleoside 5'-diphosphate + ATP = a 2'-deoxyribonucleoside 5'-triphosphate + ADP. It catalyses the reaction a ribonucleoside 5'-diphosphate + ATP = a ribonucleoside 5'-triphosphate + ADP. Its function is as follows. Major role in the synthesis of nucleoside triphosphates other than ATP. The ATP gamma phosphate is transferred to the NDP beta phosphate via a ping-pong mechanism, using a phosphorylated active-site intermediate. In Archaeoglobus fulgidus (strain ATCC 49558 / DSM 4304 / JCM 9628 / NBRC 100126 / VC-16), this protein is Nucleoside diphosphate kinase.